Reading from the N-terminus, the 178-residue chain is Nicotinamide-nucleotide adenylyltransferase (178 aa).

Belongs to the archaeal NMN adenylyltransferase family.

Its subcellular location is the cytoplasm. It catalyses the reaction beta-nicotinamide D-ribonucleotide + ATP + H(+) = diphosphate + NAD(+). It functions in the pathway cofactor biosynthesis; NAD(+) biosynthesis; NAD(+) from nicotinamide D-ribonucleotide: step 1/1. The chain is Nicotinamide-nucleotide adenylyltransferase from Pyrobaculum neutrophilum (strain DSM 2338 / JCM 9278 / NBRC 100436 / V24Sta) (Thermoproteus neutrophilus).